Here is a 47-residue protein sequence, read N- to C-terminus: Protein YqhI (47 aa).

In Escherichia coli (strain K12), this protein is Protein YqhI.